We begin with the raw amino-acid sequence, 449 residues long: Biotin carboxylase (449 aa).

The 445-residue stretch at 1-445 folds into the Biotin carboxylation domain; the sequence is MLDKIVIANR…NIHYLEKKLG (445 aa). Residues K116, K159, 165 to 166, 201 to 204, H209, and H236 each bind ATP; these read GG and EKYL. In terms of domain architecture, ATP-grasp spans 120 to 317; it reads IAAMKKAGVP…LIKEQLRIAA (198 aa). K238 contributes to the hydrogencarbonate binding site. Positions 276 and 288 each coordinate ATP. The Mg(2+) site is built by E276, E288, and N290. Residues E276, E288, and N290 each contribute to the Mn(2+) site. Residues R292, V295, and R338 each coordinate hydrogencarbonate. The active site involves R292. R338 provides a ligand contact to biotin.

In terms of assembly, acetyl-CoA carboxylase is a heterohexamer of biotin carboxyl carrier protein, biotin carboxylase and the two subunits of carboxyl transferase in a 2:2 complex. Mg(2+) is required as a cofactor. It depends on Mn(2+) as a cofactor.

It catalyses the reaction N(6)-biotinyl-L-lysyl-[protein] + hydrogencarbonate + ATP = N(6)-carboxybiotinyl-L-lysyl-[protein] + ADP + phosphate + H(+). Its pathway is lipid metabolism; malonyl-CoA biosynthesis; malonyl-CoA from acetyl-CoA: step 1/1. This protein is a component of the acetyl coenzyme A carboxylase complex; first, biotin carboxylase catalyzes the carboxylation of the carrier protein and then the transcarboxylase transfers the carboxyl group to form malonyl-CoA. The polypeptide is Biotin carboxylase (accC) (Escherichia coli O157:H7).